We begin with the raw amino-acid sequence, 102 residues long: Small ribosomal subunit protein uS10 (102 aa).

This sequence belongs to the universal ribosomal protein uS10 family. In terms of assembly, part of the 30S ribosomal subunit.

Involved in the binding of tRNA to the ribosomes. This is Small ribosomal subunit protein uS10 (rpsJ) from Bacillus subtilis (strain 168).